We begin with the raw amino-acid sequence, 1153 residues long: ATP-dependent helicase/deoxyribonuclease subunit B (1153 aa).

A UvrD-like helicase ATP-binding domain is found at 1–289 (MELNAYIGRA…KHLEQNFNAL (289 aa)). 8-15 (GRAGTGKS) lines the ATP pocket. The UvrD-like helicase C-terminal domain occupies 269–583 (LDVQRFIHND…SIGTMDLAKV (315 aa)). [4Fe-4S] cluster contacts are provided by Cys784, Cys1110, Cys1113, and Cys1119.

This sequence belongs to the helicase family. AddB/RexB type 1 subfamily. Heterodimer of AddA and AddB. Requires Mg(2+) as cofactor. [4Fe-4S] cluster is required as a cofactor.

Its function is as follows. The heterodimer acts as both an ATP-dependent DNA helicase and an ATP-dependent, dual-direction single-stranded exonuclease. Recognizes the chi site generating a DNA molecule suitable for the initiation of homologous recombination. The AddB subunit has 5' -&gt; 3' nuclease activity but not helicase activity. The sequence is that of ATP-dependent helicase/deoxyribonuclease subunit B from Staphylococcus saprophyticus subsp. saprophyticus (strain ATCC 15305 / DSM 20229 / NCIMB 8711 / NCTC 7292 / S-41).